Reading from the N-terminus, the 440-residue chain is MGDWSFLGNILEEVNEHSTVIGRVWLTVLFIFRILILGTAAEFVWGDEQSDFVCNTQQPGCENVCYDEAFPISHIRLWVLQIIFVSTPSLMYVGHAVHHVRMEEKRKDREAEELCQQSRSNGGERVPIAPDQASIRKSSSSSKGTKKFRLEGTLLRTYVCHIIFKTLFEVGFIVGHYFLYGFRILPLYRCSRWPCPNVVDCFVSRPTEKTIFILFMLSVAFVSLFLNIMEMSHLGMKGIRSAFKRPAEQPLGEIAEKSLHSIAVSSIQKAKGYQLLEEEKIVSHYFPLTEVGMVETSPLSAKPFSQFEEKIGTGPLADMSRGYQETLPSYAQVGAQEVEREEQPVEEAVEPEVGEKKQEAEKVAPEGQETVAVPDGEKVETPGVGKDDEKEELQAEKVTKQGLSAEKAPTLCPELTTDDNRPLSRLSKASSRARSDDLTI.

Residues 2 to 12 (GDWSFLGNILE) lie within the membrane without spanning it. Topologically, residues 13 to 21 (EVNEHSTVI) are cytoplasmic. Residues 22 to 42 (GRVWLTVLFIFRILILGTAAE) traverse the membrane as a helical segment. Residues 43-71 (FVWGDEQSDFVCNTQQPGCENVCYDEAFP) lie on the Extracellular side of the membrane. 3 cysteine pairs are disulfide-bonded: Cys54–Cys201, Cys61–Cys195, and Cys65–Cys190. Residues 72 to 92 (ISHIRLWVLQIIFVSTPSLMY) form a helical membrane-spanning segment. Residues 93–161 (VGHAVHHVRM…GTLLRTYVCH (69 aa)) are Cytoplasmic-facing. Residues 111–143 (AEELCQQSRSNGGERVPIAPDQASIRKSSSSSK) are disordered. The chain crosses the membrane as a helical span at residues 162–182 (IIFKTLFEVGFIVGHYFLYGF). Over 183–210 (RILPLYRCSRWPCPNVVDCFVSRPTEKT) the chain is Extracellular. Residues 211–231 (IFILFMLSVAFVSLFLNIMEM) traverse the membrane as a helical segment. At 232–440 (SHLGMKGIRS…SRARSDDLTI (209 aa)) the chain is on the cytoplasmic side. The tract at residues 334-440 (GAQEVEREEQ…SRARSDDLTI (107 aa)) is disordered. Composition is skewed to basic and acidic residues over residues 353 to 364 (VGEKKQEAEKVA) and 375 to 399 (DGEK…EKVT). Positions 423 to 432 (LSRLSKASSR) are enriched in low complexity.

This sequence belongs to the connexin family. Alpha-type (group II) subfamily. As to quaternary structure, a hemichannel or connexon is composed of a hexamer of connexins. A functional gap junction is formed by the apposition of two hemichannels. Forms heteromeric channels with GJA3. In terms of tissue distribution, detected in eye lens (at protein level).

It localises to the cell membrane. The protein resides in the cell junction. It is found in the gap junction. Functionally, structural component of eye lens gap junctions. Gap junctions are dodecameric channels that connect the cytoplasm of adjoining cells. They are formed by the docking of two hexameric hemichannels, one from each cell membrane. Small molecules and ions diffuse from one cell to a neighboring cell via the central pore. This chain is Gap junction alpha-8 protein (Gja8), found in Rattus norvegicus (Rat).